The following is a 195-amino-acid chain: dTTP/UTP pyrophosphatase (195 aa).

Catalysis depends on aspartate 76, which acts as the Proton acceptor.

It belongs to the Maf family. YhdE subfamily. A divalent metal cation is required as a cofactor.

It localises to the cytoplasm. The catalysed reaction is dTTP + H2O = dTMP + diphosphate + H(+). The enzyme catalyses UTP + H2O = UMP + diphosphate + H(+). In terms of biological role, nucleoside triphosphate pyrophosphatase that hydrolyzes dTTP and UTP. May have a dual role in cell division arrest and in preventing the incorporation of modified nucleotides into cellular nucleic acids. The chain is dTTP/UTP pyrophosphatase from Shewanella frigidimarina (strain NCIMB 400).